Here is a 982-residue protein sequence, read N- to C-terminus: METKGYHSLPEGLDMERRWGQVSQAVEHSSLGSTERTDENNYMEIVNVSCVSGAIPNNSTQGSSKEKHELLPCLQQDNNRPGILTSDIKTELESKELSATVAESMGLYMDSVRDADYYEQQNQQRSMSPAKIYQNVEQLVKFYKENGHRPSTLSCVNRPLRSFMSDSVSSVNGGVMRAIVKSPIMCHEKSPSVCSPLNMTSSVCSPAGINSVSSTTASFGSFPVHSPITQGTPLTCSPNVENRGSRSHSPAHASNVGSPLSSPLSSMKSSISSPPSHCSVKSPVSSPNNVTPRSSVSSPANINNSRCSVSSPSNTNNRSTLSSPAASTVGSICSPVNNAFSYTASGTSAGSSTSRDVVPSPDTQEKGAQEVPFPKTEEVESAISNGVTGQLNIVQYIKPEPDGAFSSSCLGGNSKINSDSPFSVPIKQESTKHSCSGTSFKGNPTVNPFPFMDGSYFSFMDDKDYYSLSGILGPPVPGFDGTCEGSGFPVGIKQEPDDGSYYPEASIPSSAIVGVNSGGQSFHYRIGAQGTISLSRSARDQSFQHLSSFPPVNTLVESWKSHGDLSSRRSDGYPVLEYIPENVSSSTLRSVSTGSSRPSKICLVCGDEASGCHYGVVTCGSCKVFFKRAVEGQHNYLCAGRNDCIIDKIRRKNCPACRLQKCLQAGMNLGARRSKKLGKLKGIHEEQPQQQPPPPPPPPQSPEEGTTYIAPAKEPSVNTALVPQLSAISRALTPSPAMVLENIEPEVVYAGYDNSKPDTAENLLSTLNRLAGKQMIQVVKWAKVLPGFKNLPLEDQITLIQYSWMCLSSFALSWRSYKHTNSQFLYFAPDLVFNEEKMHQSAMYELCQGMHQISLQFIRLQLTFEEYTIMKVLLLLSTVPKDGLKSQAAFEEMRTNYIKELRKMVTKCPNNSGQSWQRFYQLTKLLDSMHDLVNDLLEFCFYTFRESQALKVEFPAMLVEIISDQLPKVESGNAKPLYFHRK.

Residues 1–601 (METKGYHSLP…STGSSRPSKI (601 aa)) are modulating. Polar residues predominate over residues 230-242 (QGTPLTCSPNVEN). Disordered regions lie at residues 230–328 (QGTP…AAST) and 345–375 (SGTS…PFPK). A phosphoserine mark is found at S249, S258, S282, S286, and S298. Residues 258-299 (SPLSSPLSSMKSSISSPPSHCSVKSPVSSPNNVTPRSSVSSP) are compositionally biased toward low complexity. The span at 300–328 (ANINNSRCSVSSPSNTNNRSTLSSPAAST) shows a compositional bias: polar residues. Low complexity predominate over residues 345–354 (SGTSAGSSTS). Residues C602, C605, C619, C622, C638, C644, C654, and C657 each contribute to the Zn(2+) site. NR C4-type zinc fingers lie at residues 602-622 (CLVC…CGSC) and 638-662 (CAGR…LQKC). The segment at residues 602 to 667 (CLVCGDEASG…RLQKCLQAGM (66 aa)) is a DNA-binding region (nuclear receptor). Residues 668–723 (NLGARRSKKLGKLKGIHEEQPQQQPPPPPPPPQSPEEGTTYIAPAKEPSVNTALVP) form a hinge region. The segment at 682–708 (GIHEEQPQQQPPPPPPPPQSPEEGTTY) is disordered. Residues 690–701 (QQPPPPPPPPQS) are compositionally biased toward pro residues. An NR LBD domain is found at 724-962 (QLSAISRALT…EFPAMLVEII (239 aa)). Residues N768 and Q774 each coordinate 21-hydroxyprogesterone. Positions 768 and 774 each coordinate aldosterone. 2 residues coordinate progesterone: N768 and Q774. The important for coactivator binding stretch occupies residues 780–783 (KWAK). 21-hydroxyprogesterone is bound by residues R815 and T943. Aldosterone contacts are provided by R815 and T943. Progesterone is bound by residues R815 and T943.

Belongs to the nuclear hormone receptor family. NR3 subfamily. Post-translationally, phosphorylated. In terms of tissue distribution, expressed in hippocampus, being restricted to the more superficial cortical layers.

It is found in the cytoplasm. The protein resides in the nucleus. Its function is as follows. Receptor for both mineralocorticoids (MC) such as aldosterone and glucocorticoids (GC) such as corticosterone or cortisol. Binds to mineralocorticoid response elements (MRE) and transactivates target genes. The effect of MC is to increase ion and water transport and thus raise extracellular fluid volume and blood pressure and lower potassium levels. The polypeptide is Mineralocorticoid receptor (NR3C2) (Saimiri sciureus (Common squirrel monkey)).